Reading from the N-terminus, the 462-residue chain is 3-isopropylmalate dehydratase large subunit (462 aa).

[4Fe-4S] cluster is bound by residues cysteine 337, cysteine 397, and cysteine 400.

This sequence belongs to the aconitase/IPM isomerase family. LeuC type 1 subfamily. Heterodimer of LeuC and LeuD. The cofactor is [4Fe-4S] cluster.

It catalyses the reaction (2R,3S)-3-isopropylmalate = (2S)-2-isopropylmalate. The protein operates within amino-acid biosynthesis; L-leucine biosynthesis; L-leucine from 3-methyl-2-oxobutanoate: step 2/4. Catalyzes the isomerization between 2-isopropylmalate and 3-isopropylmalate, via the formation of 2-isopropylmaleate. The chain is 3-isopropylmalate dehydratase large subunit from Listeria welshimeri serovar 6b (strain ATCC 35897 / DSM 20650 / CCUG 15529 / CIP 8149 / NCTC 11857 / SLCC 5334 / V8).